A 79-amino-acid polypeptide reads, in one-letter code: Putative antitoxin VapB1 (79 aa).

Antitoxin component of a possible type II toxin-antitoxin (TA) system. The cognate toxin is VapC1. This is Putative antitoxin VapB1 (vapB1) from Mycobacterium tuberculosis (strain ATCC 25618 / H37Rv).